The chain runs to 270 residues: MQSKLLLSTKLTSQGKTQLDQYFVSPPFKVMTLPAYDDAWQNGLNAMQMSSSPGLLAGDLLDIEISLADNTALSLNTQAFTRVQSMNEGDYATQKTCIKLGKNSRLFYLPHPLVLHKDSGFKQTTEIEMSEQSELIYGEIVAIGRVLNGERFAFRHFASYLRISYQNQPLVTDRIQWLPAKMALTSLSQMEDFSHQGSLTYVNLAKNAVEIKAMVSELQALAAEQKNMLIGVSQLNEGGLMVRVLAHRADIIQHLFERIGQVLKAQSNIV.

This sequence belongs to the UreD family. UreD, UreF and UreG form a complex that acts as a GTP-hydrolysis-dependent molecular chaperone, activating the urease apoprotein by helping to assemble the nickel containing metallocenter of UreC. The UreE protein probably delivers the nickel.

It is found in the cytoplasm. Required for maturation of urease via the functional incorporation of the urease nickel metallocenter. The chain is Urease accessory protein UreD from Actinobacillus pleuropneumoniae serotype 5b (strain L20).